We begin with the raw amino-acid sequence, 75 residues long: Penaeidin-3k (75 aa).

The first 19 residues, 1–19 (MRLVVCLVFLASFALVCQG), serve as a signal peptide directing secretion. Position 20 is a pyrrolidone carboxylic acid (Gln20). Intrachain disulfides connect Cys44/Cys59, Cys48/Cys66, and Cys60/Cys67. At Ser74 the chain carries Serine amide.

This sequence belongs to the penaeidin family.

It localises to the cytoplasmic granule. Functionally, antibacterial and antifungal activity. Presents chitin-binding activity. The polypeptide is Penaeidin-3k (Penaeus setiferus (Atlantic white shrimp)).